A 280-amino-acid polypeptide reads, in one-letter code: Shikimate dehydrogenase (NADP(+)) (280 aa).

Residues 15–17 (SLS) and Thr62 each bind shikimate. Catalysis depends on Lys66, which acts as the Proton acceptor. Shikimate-binding residues include Asn88 and Asp104. NADP(+) contacts are provided by residues 128–132 (GAGGA), 151–156 (NRTEER), and Ile222. Tyr224 contacts shikimate. Gly245 lines the NADP(+) pocket.

The protein belongs to the shikimate dehydrogenase family. In terms of assembly, homodimer.

It catalyses the reaction shikimate + NADP(+) = 3-dehydroshikimate + NADPH + H(+). It participates in metabolic intermediate biosynthesis; chorismate biosynthesis; chorismate from D-erythrose 4-phosphate and phosphoenolpyruvate: step 4/7. Functionally, involved in the biosynthesis of the chorismate, which leads to the biosynthesis of aromatic amino acids. Catalyzes the reversible NADPH linked reduction of 3-dehydroshikimate (DHSA) to yield shikimate (SA). This Methanosarcina mazei (strain ATCC BAA-159 / DSM 3647 / Goe1 / Go1 / JCM 11833 / OCM 88) (Methanosarcina frisia) protein is Shikimate dehydrogenase (NADP(+)).